A 284-amino-acid polypeptide reads, in one-letter code: Small ribosomal subunit protein uS2 (284 aa).

Residues 250-272 (QELLAGATASPTAAGAAPGTPEA) show a composition bias toward low complexity. Positions 250-284 (QELLAGATASPTAAGAAPGTPEADIQTEPTAPQNP) are disordered.

Belongs to the universal ribosomal protein uS2 family.

In Mycobacterium sp. (strain KMS), this protein is Small ribosomal subunit protein uS2.